Consider the following 132-residue polypeptide: Sec-independent protein translocase protein TatB (132 aa).

Residues 2 to 22 (FDGIGFMELLLIGILGLVVLG) form a helical membrane-spanning segment. 2 stretches are compositionally biased toward polar residues: residues 86–95 (LKQAAQSVNR) and 116–132 (IAETPTQSGDTHSKNNG). Positions 86–132 (LKQAAQSVNRPYQLDESNEQEPKIAPPQANIAETPTQSGDTHSKNNG) are disordered.

It belongs to the TatB family. In terms of assembly, the Tat system comprises two distinct complexes: a TatABC complex, containing multiple copies of TatA, TatB and TatC subunits, and a separate TatA complex, containing only TatA subunits. Substrates initially bind to the TatABC complex, which probably triggers association of the separate TatA complex to form the active translocon.

The protein resides in the cell inner membrane. Functionally, part of the twin-arginine translocation (Tat) system that transports large folded proteins containing a characteristic twin-arginine motif in their signal peptide across membranes. Together with TatC, TatB is part of a receptor directly interacting with Tat signal peptides. TatB may form an oligomeric binding site that transiently accommodates folded Tat precursor proteins before their translocation. The protein is Sec-independent protein translocase protein TatB of Shewanella denitrificans (strain OS217 / ATCC BAA-1090 / DSM 15013).